A 266-amino-acid polypeptide reads, in one-letter code: Pyridoxal phosphate phosphatase YigL (266 aa).

Catalysis depends on D8, which acts as the Nucleophile. D8 is a binding site for Mg(2+). A phosphate-binding site is contributed by L9. Residue D10 participates in Mg(2+) binding. Phosphate is bound by residues 42–43 and K191; that span reads TG. A Mg(2+)-binding site is contributed by D214. Phosphate is bound at residue N217.

Belongs to the HAD-like hydrolase superfamily. Cof family. Requires Mg(2+) as cofactor. The cofactor is Mn(2+). It depends on Co(2+) as a cofactor. Zn(2+) is required as a cofactor.

The enzyme catalyses pyridoxal 5'-phosphate + H2O = pyridoxal + phosphate. It carries out the reaction sugar phosphate + H2O = sugar + phosphate.. Its function is as follows. Catalyzes the dephosphorylation of pyridoxal-phosphate (PLP) and sugar phosphate. The sequence is that of Pyridoxal phosphate phosphatase YigL (yigL) from Escherichia coli O157:H7.